The following is a 620-amino-acid chain: Glutathione-regulated potassium-efflux system protein KefC (620 aa).

12 consecutive transmembrane segments (helical) span residues 4–24 (HTLLQALIYLGSAALIVPIAV), 26–46 (LGLGSVLGYLIAGCIIGPWGL), 54–74 (SILHFAEIGVVLMLFVIGLEL), 90–110 (GALQMVVCGGLIGLFCMFLGL), 114–134 (VAELIGMTLALSSTAIAMQAM), 149–169 (FAVLLFQDIAAIPLVAMIPLL), 178–198 (LGAFALSALKVAGALALVVLL), 218–238 (VFSAVALFLVFGFGLLLEEVG), 270–290 (GLLLGLFFIGVGMSIDFGTLV), 294–314 (LRILLLLAGFLAIKIVMLWLV), 327–347 (WFAVLLGQGSEFAFVVFGAAQ), and 359–379 (ALTLAVALSMAATPIFLMLLT). An RCK N-terminal domain is found at 399–518 (QPRVIVAGFG…AGVAMPERET (120 aa)). Positions 599 to 620 (QGTAEGKHSGEAADEPEVKPSI) are disordered.

The protein belongs to the monovalent cation:proton antiporter 2 (CPA2) transporter (TC 2.A.37) family. KefC subfamily. In terms of assembly, homodimer. Interacts with the regulatory subunit KefF.

The protein localises to the cell inner membrane. In terms of biological role, pore-forming subunit of a potassium efflux system that confers protection against electrophiles. Catalyzes K(+)/H(+) antiport. This chain is Glutathione-regulated potassium-efflux system protein KefC, found in Salmonella heidelberg (strain SL476).